The following is a 353-amino-acid chain: Photosystem II protein D1 (353 aa).

Position 2 is an N-acetylthreonine (T2). Phosphothreonine is present on T2. Transmembrane regions (helical) follow at residues 29–46 (YIGW…TATS), 118–133 (HFLL…EWEL), and 142–156 (WIAV…AATA). Residue H118 participates in chlorophyll a binding. Residue Y126 participates in pheophytin a binding. [CaMn4O5] cluster-binding residues include D170 and E189. A helical membrane pass occupies residues 197–218 (FHMLGVAGVFGGSLFSAMHGSL). A chlorophyll a-binding site is contributed by H198. A quinone is bound by residues H215 and 264–265 (SF). Position 215 (H215) interacts with Fe cation. Position 272 (H272) interacts with Fe cation. Residues 274 to 288 (FLAAWPVVGIWFTAL) form a helical membrane-spanning segment. 4 residues coordinate [CaMn4O5] cluster: H332, E333, D342, and A344. A propeptide spanning residues 345-353 (SIEAPLVNG) is cleaved from the precursor.

The protein belongs to the reaction center PufL/M/PsbA/D family. PSII is composed of 1 copy each of membrane proteins PsbA, PsbB, PsbC, PsbD, PsbE, PsbF, PsbH, PsbI, PsbJ, PsbK, PsbL, PsbM, PsbT, PsbX, PsbY, PsbZ, Psb30/Ycf12, at least 3 peripheral proteins of the oxygen-evolving complex and a large number of cofactors. It forms dimeric complexes. Requires The D1/D2 heterodimer binds P680, chlorophylls that are the primary electron donor of PSII, and subsequent electron acceptors. It shares a non-heme iron and each subunit binds pheophytin, quinone, additional chlorophylls, carotenoids and lipids. D1 provides most of the ligands for the Mn4-Ca-O5 cluster of the oxygen-evolving complex (OEC). There is also a Cl(-1) ion associated with D1 and D2, which is required for oxygen evolution. The PSII complex binds additional chlorophylls, carotenoids and specific lipids. as cofactor. Tyr-161 forms a radical intermediate that is referred to as redox-active TyrZ, YZ or Y-Z. In terms of processing, C-terminally processed by CTPA; processing is essential to allow assembly of the oxygen-evolving complex and thus photosynthetic growth.

It is found in the plastid. Its subcellular location is the chloroplast thylakoid membrane. The enzyme catalyses 2 a plastoquinone + 4 hnu + 2 H2O = 2 a plastoquinol + O2. Its function is as follows. Photosystem II (PSII) is a light-driven water:plastoquinone oxidoreductase that uses light energy to abstract electrons from H(2)O, generating O(2) and a proton gradient subsequently used for ATP formation. It consists of a core antenna complex that captures photons, and an electron transfer chain that converts photonic excitation into a charge separation. The D1/D2 (PsbA/PsbD) reaction center heterodimer binds P680, the primary electron donor of PSII as well as several subsequent electron acceptors. This chain is Photosystem II protein D1, found in Psilotum nudum (Whisk fern).